Reading from the N-terminus, the 537-residue chain is 5,6-dihydroxyindole-2-carboxylic acid oxidase (537 aa).

Residues 1-24 (MKSYNVLPLAYISLFLMLFYQVWA) form the signal peptide. At 25-477 (QFPRECANIE…WPGQEFTVSE (453 aa)) the chain is on the lumenal, melanosome side. Cystine bridges form between C30–C41, C42–C65, C56–C99, C101–C110, and C113–C122. 2 N-linked (GlcNAc...) asparagine glycosylation sites follow: N96 and N104. N181 carries an N-linked (GlcNAc...) asparagine glycan. Zn(2+)-binding residues include H192, H215, and H224. 2 disulfide bridges follow: C258/C261 and C290/C303. 2 N-linked (GlcNAc...) asparagine glycosylation sites follow: N304 and N350. Residues H377 and H381 each coordinate Zn(2+). N385 is a glycosylation site (N-linked (GlcNAc...) asparagine). H404 serves as a coordination point for Zn(2+). The chain crosses the membrane as a helical span at residues 478 to 501 (IITIAVVAALLLVAAIFGVASCLI). Residues 502–537 (RSRSTKNEANQPLLTDHYQRYAEDYEELPNPNHSMV) are Cytoplasmic-facing.

This sequence belongs to the tyrosinase family. As to quaternary structure, monomer. Interacts with ATP7A. Interacts with SLC45A2. It depends on Cu(2+) as a cofactor. Zn(2+) serves as cofactor. Post-translationally, glycosylated. Pigment cells.

The protein localises to the melanosome membrane. It carries out the reaction 2 5,6-dihydroxyindole-2-carboxylate + O2 = 2 indole-5,6-quinone-2-carboxylate + 2 H2O. It participates in pigment biosynthesis; melanin biosynthesis. Plays a role in melanin biosynthesis. Catalyzes the oxidation of 5,6-dihydroxyindole-2-carboxylic acid (DHICA) into indole-5,6-quinone-2-carboxylic acid. May regulate or influence the type of melanin synthesized. Also to a lower extent, capable of hydroxylating tyrosine and producing melanin. The sequence is that of 5,6-dihydroxyindole-2-carboxylic acid oxidase (Tyrp1) from Mus musculus (Mouse).